We begin with the raw amino-acid sequence, 166 residues long: Lymphocyte antigen 6G6e (166 aa).

The N-terminal stretch at 1 to 18 is a signal peptide; the sequence is MGPSSAFLGVLFLSGTLG. One can recognise a UPAR/Ly6 domain in the interval 28 to 151; it reads LRCYTCSFAK…PPPNLPLMTL (124 aa). 4 disulfides stabilise this stretch: C30–C52, C33–C39, C110–C129, and C130–C135.

As to quaternary structure, interacts with CHRNA4. In terms of processing, O-glycosylated. Contains sialic acid residues.

It is found in the cell surface. It localises to the cell membrane. The protein resides in the cell projection. In terms of biological role, believed to act as a modulator of nicotinic acetylcholine receptors (nAChRs) activity. In vitro potentiates alpha-3:beta-4-containing nAChRs maximum response by increasing peak current and slowing down receptor desensitization; the activity is dependent on its cell surface localization. This Mus musculus (Mouse) protein is Lymphocyte antigen 6G6e (Ly6g6e).